Here is a 150-residue protein sequence, read N- to C-terminus: MKKLLSLVIIVVGIIADQVFKNWVVANIQLGDTKKIWPDVLSLTYIKNDGAAWSSFSGQQWFFLVLTPIVLIVALWFLWKKMGQNWYFAGLTLIIAGALGNFIDRVRQGFVVDMFQTEFMDFPIFNIADILLSVGFVVLFIAILTDKETK.

Transmembrane regions (helical) follow at residues 5-25, 59-79, and 83-103; these read LSLVIIVVGIIADQVFKNWVV, QQWFFLVLTPIVLIVALWFLW, and GQNWYFAGLTLIIAGALGNFI. Active-site residues include aspartate 113 and aspartate 129. Residues 124–144 traverse the membrane as a helical segment; that stretch reads IFNIADILLSVGFVVLFIAIL.

Belongs to the peptidase A8 family.

The protein localises to the cell membrane. It catalyses the reaction Release of signal peptides from bacterial membrane prolipoproteins. Hydrolyzes -Xaa-Yaa-Zaa-|-(S,diacylglyceryl)Cys-, in which Xaa is hydrophobic (preferably Leu), and Yaa (Ala or Ser) and Zaa (Gly or Ala) have small, neutral side chains.. Its pathway is protein modification; lipoprotein biosynthesis (signal peptide cleavage). In terms of biological role, this protein specifically catalyzes the removal of signal peptides from prolipoproteins. In Lactococcus lactis subsp. cremoris (strain MG1363), this protein is Lipoprotein signal peptidase.